Here is a 204-residue protein sequence, read N- to C-terminus: Leucyl/phenylalanyl-tRNA--protein transferase (204 aa).

Belongs to the L/F-transferase family.

It is found in the cytoplasm. It catalyses the reaction N-terminal L-lysyl-[protein] + L-leucyl-tRNA(Leu) = N-terminal L-leucyl-L-lysyl-[protein] + tRNA(Leu) + H(+). The catalysed reaction is N-terminal L-arginyl-[protein] + L-leucyl-tRNA(Leu) = N-terminal L-leucyl-L-arginyl-[protein] + tRNA(Leu) + H(+). The enzyme catalyses L-phenylalanyl-tRNA(Phe) + an N-terminal L-alpha-aminoacyl-[protein] = an N-terminal L-phenylalanyl-L-alpha-aminoacyl-[protein] + tRNA(Phe). Functionally, functions in the N-end rule pathway of protein degradation where it conjugates Leu, Phe and, less efficiently, Met from aminoacyl-tRNAs to the N-termini of proteins containing an N-terminal arginine or lysine. The chain is Leucyl/phenylalanyl-tRNA--protein transferase from Brucella anthropi (strain ATCC 49188 / DSM 6882 / CCUG 24695 / JCM 21032 / LMG 3331 / NBRC 15819 / NCTC 12168 / Alc 37) (Ochrobactrum anthropi).